Here is a 152-residue protein sequence, read N- to C-terminus: Nucleoside diphosphate kinase (152 aa).

6 residues coordinate ATP: Lys-11, Phe-59, Arg-87, Thr-93, Arg-104, and Asn-114. Residue His-117 is the Pros-phosphohistidine intermediate of the active site.

The protein belongs to the NDK family. Homotetramer. The cofactor is Mg(2+).

The protein localises to the cytoplasm. The enzyme catalyses dZDP + ATP = dZTP + ADP. It catalyses the reaction a 2'-deoxyribonucleoside 5'-diphosphate + ATP = a 2'-deoxyribonucleoside 5'-triphosphate + ADP. The catalysed reaction is a ribonucleoside 5'-diphosphate + ATP = a ribonucleoside 5'-triphosphate + ADP. Its pathway is purine metabolism. Major role in the synthesis of nucleoside triphosphates other than ATP. The ATP gamma phosphate is transferred to the NDP beta phosphate via a ping-pong mechanism, using a phosphorylated active-site intermediate. Functionally, (Microbial infection) Catalyzes the phosphorylation of dZDP to dZTP, when the bacterium is infected by a phage that produces the substrate for the synthesis of dZTP (2- amino-2'-deoxyadenosine 5'-triphosphate), which is then used by the phage as a DNA polymerase substrate. In Synechococcus sp. (strain CC9311), this protein is Nucleoside diphosphate kinase.